A 450-amino-acid chain; its full sequence is E3 ubiquitin-protein ligase XB3 (450 aa).

6 ANK repeats span residues 11–40, 46–75, 79–108, 113–142, 158–187, and 195–225; these read GDEH…SLAR, DRLS…PPDA, HKQT…NILM, HART…TTPV, HGAT…IVSA, and PGST…RLQR. The tract at residues 291 to 312 is disordered; the sequence is ILNGTKYSLPSPSPGDDSADDD. The segment at 323 to 372 adopts an RING-type zinc-finger fold; that stretch reads CCICFDQACTIEVQDCGHQMCAPCTLALCCHNKPNPTTLTPPSPACPFCR. Residues 385–450 form a disordered region; it reads SACDPDKPSS…SNLDKPEHDL (66 aa).

Interacts (via ankyrin repeats) with XA21. In terms of processing, phosphorylated by XA21.

It catalyses the reaction S-ubiquitinyl-[E2 ubiquitin-conjugating enzyme]-L-cysteine + [acceptor protein]-L-lysine = [E2 ubiquitin-conjugating enzyme]-L-cysteine + N(6)-ubiquitinyl-[acceptor protein]-L-lysine.. Its pathway is protein modification; protein ubiquitination. In terms of biological role, E3 ubiquitin-protein ligase required for full accumulation of the LRR receptor kinase XA21 and XA21-mediated disease resistance. Binding to XA21 may stabilize the receptor kinase and maintain its protein level. Autoubiquitinated in vitro. The sequence is that of E3 ubiquitin-protein ligase XB3 (XB3) from Oryza sativa subsp. japonica (Rice).